The sequence spans 565 residues: Carboxylesterase 1D (565 aa).

The first 18 residues, 1-18 (MRLYPLVWLFLAACTAWG), serve as a signal peptide directing secretion. Asparagine 79 is a glycosylation site (N-linked (GlcNAc...) asparagine). Residues cysteine 87 and cysteine 116 are joined by a disulfide bond. The active-site Acyl-ester intermediate is the serine 221. Cysteine 273 and cysteine 284 are joined by a disulfide. The active-site Charge relay system is the glutamate 353. Lysine 382 carries the post-translational modification N6-succinyllysine. Histidine 466 (charge relay system) is an active-site residue. An N-linked (GlcNAc...) asparagine glycan is attached at asparagine 489. Residues 562 to 565 (HVEL) carry the Prevents secretion from ER motif.

It belongs to the type-B carboxylesterase/lipase family. As to quaternary structure, homotrimer. In terms of tissue distribution, detected in liver, lung and testis, but not in kidney (at protein level).

The protein localises to the endoplasmic reticulum lumen. The protein resides in the cytoplasm. Its subcellular location is the cytosol. It localises to the lipid droplet. It is found in the microsome. It carries out the reaction all-trans-retinyl hexadecanoate + H2O = all-trans-retinol + hexadecanoate + H(+). The catalysed reaction is a carboxylic ester + H2O = an alcohol + a carboxylate + H(+). The enzyme catalyses a long-chain fatty acyl ethyl ester + H2O = a long-chain fatty acid + ethanol + H(+). Its activity is regulated as follows. FAEE-synthesizing and PNPB-hydrolyzing activities are both inhibited by DFP. Major lipase in white adipose tissue. Involved in the metabolism of xenobiotics and of natural substrates. Hydrolyzes triacylglycerols and monoacylglycerols, with a preference for monoacylglycerols. The susceptibility of the substrate increases with decreasing acyl chain length of the fatty acid moiety. Catalyzes the synthesis of fatty acid ethyl esters. Hydrolyzes retinyl esters. The protein is Carboxylesterase 1D of Rattus norvegicus (Rat).